A 124-amino-acid chain; its full sequence is Small ribosomal subunit protein uS12 (124 aa).

Positions 1–20 are disordered; the sequence is MPTIQQLVRKGRTPKVVKTK. Positions 9–18 are enriched in basic residues; the sequence is RKGRTPKVVK. At Asp-89 the chain carries 3-methylthioaspartic acid.

The protein belongs to the universal ribosomal protein uS12 family. As to quaternary structure, part of the 30S ribosomal subunit. Contacts proteins S8 and S17. May interact with IF1 in the 30S initiation complex.

Its function is as follows. With S4 and S5 plays an important role in translational accuracy. In terms of biological role, interacts with and stabilizes bases of the 16S rRNA that are involved in tRNA selection in the A site and with the mRNA backbone. Located at the interface of the 30S and 50S subunits, it traverses the body of the 30S subunit contacting proteins on the other side and probably holding the rRNA structure together. The combined cluster of proteins S8, S12 and S17 appears to hold together the shoulder and platform of the 30S subunit. In Clavibacter michiganensis subsp. michiganensis (strain NCPPB 382), this protein is Small ribosomal subunit protein uS12.